The chain runs to 1530 residues: Neurexin-1 (1530 aa).

The first 30 residues, methionine 1–glycine 30, serve as a signal peptide directing secretion. In terms of domain architecture, Laminin G-like 1 spans leucine 31–glycine 212. The Extracellular portion of the chain corresponds to leucine 31–threonine 1454. N-linked (GlcNAc...) asparagine glycans are attached at residues asparagine 125 and asparagine 190. The disordered stretch occupies residues serine 199 to glutamate 221. The EGF-like 1 domain occupies glycine 213 to serine 256. 2 disulfide bridges follow: cysteine 228–cysteine 243 and cysteine 245–cysteine 255. 2 consecutive Laminin G-like domains span residues isoleucine 299–cysteine 496 and aspartate 503–cysteine 695. Aspartate 345, leucine 362, and methionine 430 together coordinate Ca(2+). Disulfide bonds link cysteine 460–cysteine 496, cysteine 666–cysteine 695, cysteine 703–cysteine 714, cysteine 708–cysteine 723, and cysteine 725–cysteine 735. Residues threonine 699–glutamate 736 enclose the EGF-like 2 domain. A glycan (O-linked (Glc...) serine) is linked at serine 705. Laminin G-like domains lie at valine 741 to cysteine 914 and aspartate 928 to cysteine 1103. Aspartate 788 and leucine 805 together coordinate Ca(2+). N-linked (GlcNAc...) asparagine glycosylation is present at asparagine 813. A Ca(2+)-binding site is contributed by arginine 864. Cystine bridges form between cysteine 906–cysteine 914, cysteine 1075–cysteine 1103, cysteine 1110–cysteine 1121, cysteine 1115–cysteine 1130, and cysteine 1132–cysteine 1142. One can recognise an EGF-like 3 domain in the interval proline 1106–asparagine 1143. Positions tyrosine 1149–valine 1347 constitute a Laminin G-like 6 domain. Ca(2+) is bound by residues aspartate 1199 and valine 1216. Asparagine 1246 is a glycosylation site (N-linked (GlcNAc...) asparagine). Ca(2+)-binding residues include isoleucine 1298 and asparagine 1300. Serine 1408 is a glycosylation site (O-linked (Xyl...) (heparan sulfate) serine). The segment at cysteine 1411 to serine 1443 is disordered. Residues glycine 1455 to methionine 1475 form a helical membrane-spanning segment. Over tyrosine 1476 to valine 1530 the chain is Cytoplasmic. The interaction with CASK stretch occupies residues asparagine 1497–asparagine 1523. Positions asparagine 1497 to valine 1530 are disordered.

Belongs to the neurexin family. In terms of assembly, interacts (via laminin G-like domain 2 and/or laminin G-like domain 6) with NLGN1 forming a heterotetramer, where one NLGN1 dimer interacts with one NRXN1 dimer. Also interacts (via laminin G-like domain 2 and/or laminin G-like domain 6) with NLGN2, NLGN3 and NLGN4L; interactions with NLGN1, NLGN2, NLGN3 and NLGN4L are calcium-dependent. Interacts (via cytoplasmic C-terminal region) with CASK (via the PDZ, SH3 and guanylate kinase-like domains). Interacts (via cytoplasmic C-terminus) with CASKIN1 and APBA1. Interacts (via laminin G-like domain 2) with NXPH1 and NXPH3. Alpha-type isoforms (neurexin-1-alpha) interact (via laminin G-like domain 2 and/or laminin G-like domain 6) with DAG1 (via alpha-dystroglycan chain). Interacts with LRRTM1, LRRTM2, LRRTM3 and LRRTM4. Interacts with SYT13 and SYTL1. Interacts with CBLN1, CBLN2 and, less avidly, with CBLN4. Interacts with CLSTN3. Alpha-type isoforms interact with alpha-latrotoxin from spider venom. In terms of processing, O-glycosylated; contains heparan sulfate. Heparan sulfate attachment is required for synapse development by mediating interactions with neuroligins and LRRTM2.

Its subcellular location is the presynaptic cell membrane. In terms of biological role, cell surface protein involved in cell-cell-interactions, exocytosis of secretory granules and regulation of signal transmission. Function is isoform-specific. Alpha-type isoforms have a long N-terminus with six laminin G-like domains and play an important role in synaptic signal transmission. Alpha-type isoforms play a role in the regulation of calcium channel activity and Ca(2+)-triggered neurotransmitter release at synapses and at neuromuscular junctions. They play an important role in Ca(2+)-triggered exocytosis of secretory granules in pituitary gland. They may affect their functions at synapses and in endocrine cells via their interactions with proteins from the exocytotic machinery. Likewise, alpha-type isoforms play a role in regulating the activity of postsynaptic NMDA receptors, a subtype of glutamate-gated ion channels. Both alpha-type and beta-type isoforms may play a role in the formation or maintenance of synaptic junctions via their interactions (via the extracellular domains) with neuroligin family members, CBLN1 or CBLN2. In vitro, triggers the de novo formation of presynaptic structures. May be involved in specification of excitatory synapses. Alpha-type isoforms were first identified as receptors for alpha-latrotoxin from spider venom. The sequence is that of Neurexin-1 (NRXN1) from Bos taurus (Bovine).